The sequence spans 98 residues: Growth-regulated protein homolog gamma (98 aa).

Positions Met-1–Ala-29 are cleaved as a signal peptide. 2 disulfide bridges follow: Cys-39–Cys-65 and Cys-41–Cys-81.

It belongs to the intercrine alpha (chemokine CxC) family.

The protein resides in the secreted. The protein is Growth-regulated protein homolog gamma of Bos taurus (Bovine).